A 295-amino-acid polypeptide reads, in one-letter code: Acetylglutamate kinase (295 aa).

Residues 66–67, Arg-88, and Asn-193 contribute to the substrate site; that span reads GG.

This sequence belongs to the acetylglutamate kinase family. ArgB subfamily.

The protein localises to the cytoplasm. The enzyme catalyses N-acetyl-L-glutamate + ATP = N-acetyl-L-glutamyl 5-phosphate + ADP. The protein operates within amino-acid biosynthesis; L-arginine biosynthesis; N(2)-acetyl-L-ornithine from L-glutamate: step 2/4. Its function is as follows. Catalyzes the ATP-dependent phosphorylation of N-acetyl-L-glutamate. This chain is Acetylglutamate kinase, found in Rhizobium etli (strain CIAT 652).